Consider the following 329-residue polypeptide: 36 kDa antigen (329 aa).

Residues 11–31 form a helical membrane-spanning segment; it reads AILTGGGALLLGLIVLFYLAY.

The protein belongs to the membrane fusion protein (MFP) (TC 8.A.1) family.

Its subcellular location is the membrane. This chain is 36 kDa antigen, found in Helicobacter pylori (strain J99 / ATCC 700824) (Campylobacter pylori J99).